The sequence spans 445 residues: Gamma-glutamyl phosphate reductase (445 aa).

The protein belongs to the gamma-glutamyl phosphate reductase family.

The protein resides in the cytoplasm. It carries out the reaction L-glutamate 5-semialdehyde + phosphate + NADP(+) = L-glutamyl 5-phosphate + NADPH + H(+). It functions in the pathway amino-acid biosynthesis; L-proline biosynthesis; L-glutamate 5-semialdehyde from L-glutamate: step 2/2. Its function is as follows. Catalyzes the NADPH-dependent reduction of L-glutamate 5-phosphate into L-glutamate 5-semialdehyde and phosphate. The product spontaneously undergoes cyclization to form 1-pyrroline-5-carboxylate. This chain is Gamma-glutamyl phosphate reductase, found in Persephonella marina (strain DSM 14350 / EX-H1).